The primary structure comprises 212 residues: Large ribosomal subunit protein bL25 (212 aa).

The interval 190–212 (IAEAGDALAEPEVISKGSGEADE) is disordered.

Belongs to the bacterial ribosomal protein bL25 family. CTC subfamily. Part of the 50S ribosomal subunit; part of the 5S rRNA/L5/L18/L25 subcomplex. Contacts the 5S rRNA. Binds to the 5S rRNA independently of L5 and L18.

Its function is as follows. This is one of the proteins that binds to the 5S RNA in the ribosome where it forms part of the central protuberance. This is Large ribosomal subunit protein bL25 from Rhodopirellula baltica (strain DSM 10527 / NCIMB 13988 / SH1).